The following is a 198-amino-acid chain: Snake venom metalloproteinase BpirMP (198 aa).

The Peptidase M12B domain maps to Thr-1–Pro-197. Residues Glu-4 and Asp-88 each coordinate Ca(2+). Disulfide bonds link Cys-112–Cys-192, Cys-152–Cys-176, and Cys-154–Cys-159. His-137 lines the Zn(2+) pocket. The active site involves Glu-138. Residues His-141 and His-147 each contribute to the Zn(2+) site. Ca(2+)-binding residues include Cys-192 and Asn-195.

It belongs to the venom metalloproteinase (M12B) family. P-I subfamily. Monomer. The cofactor is Zn(2+). As to expression, expressed by the venom gland.

The protein resides in the secreted. With respect to regulation, inhibited by the chelating agents EDTA, EGTA and 1,10-phenanthroline. Is not inhibited by serine proteinase inhibitors aprotinin, leupeptin and benzamidine. Functionally, zinc metalloprotease that preferentially degrades Aalpha chain of fibrinogen (FGA) (at a dose of 5 ug, whereas at a dose of 10 ug, both FGA and FGB are completely degraded). Degrades fibrin gel in a dose-dependent manner, as well blood clots formed in vitro (thrombolytic activity). Induces hemorrhage (in the dorsal skin of mice), with an MHD of 50 ug. The basal membrane components collagen (all chains of type IV) (COL4A4), fibronectin (FN1), laminin and nidogen are all degraded by this toxin. The protein is Snake venom metalloproteinase BpirMP of Bothrops pirajai (Piraja's lancehead).